The following is a 151-amino-acid chain: Histone H2B.1 (151 aa).

2 stretches are compositionally biased toward basic and acidic residues: residues 1–28 and 36–51; these read MAPKAEKKPAAKKPAEEEPATEKVEKAP and EKRLPAGKSKEGGEGK. Residues 1 to 58 form a disordered region; that stretch reads MAPKAEKKPAAKKPAEEEPATEKVEKAPAGKKPKAEKRLPAGKSKEGGEGKKGKKKAK. K7 and K37 each carry N6-acetyllysine. A Glycyl lysine isopeptide (Lys-Gly) (interchain with G-Cter in ubiquitin) cross-link involves residue K147.

It belongs to the histone H2B family. The nucleosome is a histone octamer containing two molecules each of H2A, H2B, H3 and H4 assembled in one H3-H4 heterotetramer and two H2A-H2B heterodimers. The octamer wraps approximately 147 bp of DNA. In terms of processing, can be acetylated to form H2BK6ac and H2BK33ac. Monoubiquitinated to form H2BK143ub1; may give a specific tag for epigenetic transcriptional activation.

It localises to the nucleus. The protein localises to the chromosome. In terms of biological role, core component of nucleosome. Nucleosomes wrap and compact DNA into chromatin, limiting DNA accessibility to the cellular machineries which require DNA as a template. Histones thereby play a central role in transcription regulation, DNA repair, DNA replication and chromosomal stability. DNA accessibility is regulated via a complex set of post-translational modifications of histones, also called histone code, and nucleosome remodeling. The chain is Histone H2B.1 from Zea mays (Maize).